A 163-amino-acid chain; its full sequence is NADH-quinone oxidoreductase subunit I (163 aa).

2 4Fe-4S ferredoxin-type domains span residues 53-83 (LRRYPNGEERCIACKLCEAICPAQAITIEAG) and 94-123 (VRYDIDMVKCIYCGFCQEACPVDAIVEGPN). Residues Cys-63, Cys-66, Cys-69, Cys-73, Cys-103, Cys-106, Cys-109, and Cys-113 each contribute to the [4Fe-4S] cluster site.

It belongs to the complex I 23 kDa subunit family. NDH-1 is composed of 14 different subunits. Subunits NuoA, H, J, K, L, M, N constitute the membrane sector of the complex. Requires [4Fe-4S] cluster as cofactor.

The protein localises to the cell inner membrane. It catalyses the reaction a quinone + NADH + 5 H(+)(in) = a quinol + NAD(+) + 4 H(+)(out). NDH-1 shuttles electrons from NADH, via FMN and iron-sulfur (Fe-S) centers, to quinones in the respiratory chain. The immediate electron acceptor for the enzyme in this species is believed to be ubiquinone. Couples the redox reaction to proton translocation (for every two electrons transferred, four hydrogen ions are translocated across the cytoplasmic membrane), and thus conserves the redox energy in a proton gradient. This Allorhizobium ampelinum (strain ATCC BAA-846 / DSM 112012 / S4) (Agrobacterium vitis (strain S4)) protein is NADH-quinone oxidoreductase subunit I.